A 259-amino-acid polypeptide reads, in one-letter code: Tumor necrosis factor receptor superfamily member 10C (259 aa).

The signal sequence occupies residues Met1 to Ser25. TNFR-Cys repeat units follow at residues Ala29–Cys66, Cys69–Cys109, and Gln110–Cys149. Residues Arg30–Arg45 show a composition bias toward polar residues. The disordered stretch occupies residues Arg30–Gly56. 7 cysteine pairs are disulfide-bonded: Cys53–Cys66, Cys69–Cys85, Cys88–Cys101, Cys91–Cys109, Cys111–Cys125, Cys128–Cys141, and Cys131–Cys149. Asn77 carries an N-linked (GlcNAc...) (high mannose) asparagine glycan. 2 N-linked (GlcNAc...) (high mannose) asparagine glycosylation sites follow: Asn140 and Asn156. Positions Glu160–Ala224 are disordered. TAPE repeat units follow at residues Pro162–Ala176, Pro177–Ala191, Pro192–Ala206, Pro207–Ala221, and Pro222–Ala236. Residues Thr185–Pro217 show a composition bias toward low complexity. Ala236 carries the GPI-anchor amidated alanine lipid modification. Residues Ser237 to Val259 constitute a propeptide, removed in mature form.

N-glycosylated and O-glycosylated. Higher expression in normal tissues than in tumor cell lines. Highly expressed in peripheral blood lymphocytes, spleen, skeletal muscle, placenta, lung and heart.

The protein localises to the cell membrane. Receptor for the cytotoxic ligand TRAIL. Lacks a cytoplasmic death domain and hence is not capable of inducing apoptosis. May protect cells against TRAIL mediated apoptosis by competing with TRAIL-R1 and R2 for binding to the ligand. This is Tumor necrosis factor receptor superfamily member 10C (TNFRSF10C) from Homo sapiens (Human).